A 427-amino-acid chain; its full sequence is Serine--tRNA ligase (427 aa).

T231–E233 lines the L-serine pocket. R262–E264 is an ATP binding site. Residue E285 participates in L-serine binding. An ATP-binding site is contributed by E349–S352. S385 contributes to the L-serine binding site.

The protein belongs to the class-II aminoacyl-tRNA synthetase family. Type-1 seryl-tRNA synthetase subfamily. As to quaternary structure, homodimer. The tRNA molecule binds across the dimer.

It localises to the cytoplasm. It catalyses the reaction tRNA(Ser) + L-serine + ATP = L-seryl-tRNA(Ser) + AMP + diphosphate + H(+). The enzyme catalyses tRNA(Sec) + L-serine + ATP = L-seryl-tRNA(Sec) + AMP + diphosphate + H(+). It participates in aminoacyl-tRNA biosynthesis; selenocysteinyl-tRNA(Sec) biosynthesis; L-seryl-tRNA(Sec) from L-serine and tRNA(Sec): step 1/1. Catalyzes the attachment of serine to tRNA(Ser). Is also able to aminoacylate tRNA(Sec) with serine, to form the misacylated tRNA L-seryl-tRNA(Sec), which will be further converted into selenocysteinyl-tRNA(Sec). This is Serine--tRNA ligase from Listeria welshimeri serovar 6b (strain ATCC 35897 / DSM 20650 / CCUG 15529 / CIP 8149 / NCTC 11857 / SLCC 5334 / V8).